A 439-amino-acid polypeptide reads, in one-letter code: Protein pop-1 (439 aa).

The tract at residues 1–38 (MMADEELGDEVKVFRRDEDADDDPMISGETSEQQLADD) is disordered. Over residues 9 to 18 (DEVKVFRRDE) the composition is skewed to basic and acidic residues. The interval 87-138 (SGLPIMFPMVVPQYLSPNPNINMMNMMTMRAAMAGAPLSPAFPAMFSPNPLF) is involved in nuclear asymmetry. Ser-125 carries the post-translational modification Phosphoserine; by LIT1. A DNA-binding region (HMG box) is located at residues 199 to 269 (IKKPLNAFMW…SHKEKYPQWS (71 aa)). The segment covering 254–265 (AKKDRESHKEKY) has biased composition (basic and acidic residues). 3 disordered regions span residues 254–298 (AKKD…NNDQ), 329–365 (RSGS…MPMN), and 385–439 (SAHL…VCTL). A compositionally biased stretch (basic residues) spans 277-286 (NKKKPKRKRD). Low complexity-rich tracts occupy residues 346–365 (GCSS…MPMN) and 385–400 (SAHL…SGTS). Acidic residues predominate over residues 409-420 (SESDVDEDEDID). The span at 422-439 (TITQQTQEYIMQESVCTL) shows a compositional bias: polar residues.

It belongs to the TCF/LEF family. Interacts with hda-1. Interacts with bar-1. Interacts with par-5; the interaction is direct and is enhanced by lit-1-mediated pop-1 phosphorylation. The interaction also leads to the subsequent nuclear export of pop-1. Interacts (when phosphorylated on Ser-125) with lit-1; the interaction is dependent on the beta-catenin-lit-1 complex. Interacts with wrm-1. In terms of processing, phosphorylated on Ser-125 by lit-1 in the beta-catenin-lit-1 complex. Phosphorylation promotes the interaction of pop-1 and par-5 and the subsequent translocation of pop-1 from the nucleus to the cytoplasm.

It localises to the nucleus. Its subcellular location is the cytoplasm. Functionally, part of the Wnt signaling pathway essential for the specification of the mesodermal cell fate in early embryos. Required for asymmetrical division of somatic gonadal precursor descendants which initiate axis formation required to control organ shape. Similarly, involved in asymmetrical division of seam cells, a stem cell-like lineage. Represses expression of target genes via its interaction with hda-1 histone deacetylase. Required for specification of the M lineage-derived coelomocyte and sex myoblast fate. Regulates coelomocyte fate by positively regulating proliferation and ceh-34 and possibly eya-1 expression in M.dlpa and M.drpa precursors. The sequence is that of Protein pop-1 from Caenorhabditis briggsae.